Consider the following 404-residue polypeptide: Glycosylated lysosomal membrane protein (404 aa).

A signal peptide spans 1–35 (MFRCWGPHWGWVPCAPTPWLLLSLLVCSAPFGLQG). Topologically, residues 36 to 370 (EETRQVSMEV…VDIFSPLVLG (335 aa)) are lumenal. Residues Asn64, Asn85, Asn94, Asn133, Asn157, Asn166, Asn185, Asn228, and Asn331 are each glycosylated (N-linked (GlcNAc...) asparagine). A helical transmembrane segment spans residues 371-391 (IMAVALGAPGLMFLGGGLFLL). The Cytoplasmic portion of the chain corresponds to 392-404 (LRHRRYSEYQSIN). Residues 400 to 404 (YQSIN) carry the Lysosomal targeting motif motif.

It belongs to the GLMP family. In terms of assembly, interacts (via lumenal domain) with lysosomal protein MFSD1; the interaction starts while both proteins are still in the endoplasmic reticulum and is required for stabilization of MFSD1 in lysosomes but has no direct effect on its targeting to lysosomes or transporter activity. Post-translationally, highly N-glycosylated. N-glycosylation is essential for GLMP stability and for MFSD1 lysosomal localization. In terms of tissue distribution, detected in brain, heart, liver, kidney, lung, intestine, testis and spleen. Expressed at highest levels in kidney cortex. However, another study reports highest expression levels in lung. Expressed in myoblasts with expression increasing during differentiation into myotubes.

It is found in the lysosome membrane. Its function is as follows. Required to protect lysosomal transporter MFSD1 from lysosomal proteolysis and for MFSD1 lysosomal localization. The sequence is that of Glycosylated lysosomal membrane protein from Mus musculus (Mouse).